We begin with the raw amino-acid sequence, 300 residues long: Tyrosine recombinase XerC (300 aa).

One can recognise a Core-binding (CB) domain in the interval 2–88; sequence ENVNFTLNLF…SLRSFYKFLL (87 aa). Positions 109–294 constitute a Tyr recombinase domain; that stretch reads KIPHFLYPDE…TKDHLRYVYL (186 aa). Active-site residues include R149, K173, H246, R249, and H272. The O-(3'-phospho-DNA)-tyrosine intermediate role is filled by Y281.

It belongs to the 'phage' integrase family. XerC subfamily. As to quaternary structure, forms a cyclic heterotetrameric complex composed of two molecules of XerC and two molecules of XerD.

The protein localises to the cytoplasm. In terms of biological role, site-specific tyrosine recombinase, which acts by catalyzing the cutting and rejoining of the recombining DNA molecules. The XerC-XerD complex is essential to convert dimers of the bacterial chromosome into monomers to permit their segregation at cell division. It also contributes to the segregational stability of plasmids. In Anoxybacillus flavithermus (strain DSM 21510 / WK1), this protein is Tyrosine recombinase XerC.